Reading from the N-terminus, the 684-residue chain is Threonine--tRNA ligase (684 aa).

The TGS domain occupies 1–60; the sequence is MSISITLHRSGTSRTQQVDTTTTGLDLFGSDRAVVAMRVDGNLVDLQRELHDGAEVEPVE. The segment at 256–567 is catalytic; it reads DHRKLGAELD…LTEHYAGAFP (312 aa). Zn(2+)-binding residues include Cys361, His412, and His544.

This sequence belongs to the class-II aminoacyl-tRNA synthetase family. As to quaternary structure, homodimer. The cofactor is Zn(2+).

Its subcellular location is the cytoplasm. The catalysed reaction is tRNA(Thr) + L-threonine + ATP = L-threonyl-tRNA(Thr) + AMP + diphosphate + H(+). Functionally, catalyzes the attachment of threonine to tRNA(Thr) in a two-step reaction: L-threonine is first activated by ATP to form Thr-AMP and then transferred to the acceptor end of tRNA(Thr). Also edits incorrectly charged L-seryl-tRNA(Thr). The chain is Threonine--tRNA ligase from Cutibacterium acnes (strain DSM 16379 / KPA171202) (Propionibacterium acnes).